A 467-amino-acid chain; its full sequence is 3-isopropylmalate dehydratase large subunit (467 aa).

[4Fe-4S] cluster contacts are provided by Cys347, Cys407, and Cys410.

The protein belongs to the aconitase/IPM isomerase family. LeuC type 1 subfamily. As to quaternary structure, heterodimer of LeuC and LeuD. [4Fe-4S] cluster serves as cofactor.

It carries out the reaction (2R,3S)-3-isopropylmalate = (2S)-2-isopropylmalate. Its pathway is amino-acid biosynthesis; L-leucine biosynthesis; L-leucine from 3-methyl-2-oxobutanoate: step 2/4. Functionally, catalyzes the isomerization between 2-isopropylmalate and 3-isopropylmalate, via the formation of 2-isopropylmaleate. The protein is 3-isopropylmalate dehydratase large subunit of Synechococcus sp. (strain JA-2-3B'a(2-13)) (Cyanobacteria bacterium Yellowstone B-Prime).